Consider the following 325-residue polypeptide: Putative gluconeogenesis factor (325 aa).

Belongs to the gluconeogenesis factor family.

The protein localises to the cytoplasm. Functionally, required for morphogenesis under gluconeogenic growth conditions. The sequence is that of Putative gluconeogenesis factor from Streptococcus pneumoniae serotype 4 (strain ATCC BAA-334 / TIGR4).